We begin with the raw amino-acid sequence, 158 residues long: Small ribosomal subunit protein uS9 (158 aa).

It belongs to the universal ribosomal protein uS9 family.

In Brucella canis (strain ATCC 23365 / NCTC 10854 / RM-666), this protein is Small ribosomal subunit protein uS9.